A 171-amino-acid chain; its full sequence is KRAB domain-containing protein 4 (171 aa).

In terms of domain architecture, KRAB spans 8 to 79 (LTFKDVFVDF…DGGTPVRTCA (72 aa)).

In terms of tissue distribution, expressed in brain, ovary, testis, prostate, tonsil, heart, bone marrow, colon, breast and kidney.

In Homo sapiens (Human), this protein is KRAB domain-containing protein 4 (KRBOX4).